The chain runs to 383 residues: Acetylornithine deacetylase (383 aa).

Residue His-80 participates in Zn(2+) binding. The active site involves Asp-82. Asp-112 contacts Zn(2+). Glu-144 is a catalytic residue. Zn(2+) contacts are provided by Glu-145, Glu-169, and His-355.

This sequence belongs to the peptidase M20A family. ArgE subfamily. In terms of assembly, homodimer. The cofactor is Zn(2+). It depends on Co(2+) as a cofactor. Glutathione serves as cofactor.

It localises to the cytoplasm. It carries out the reaction N(2)-acetyl-L-ornithine + H2O = L-ornithine + acetate. It functions in the pathway amino-acid biosynthesis; L-arginine biosynthesis; L-ornithine from N(2)-acetyl-L-ornithine (linear): step 1/1. Functionally, catalyzes the hydrolysis of the amide bond of N(2)-acetylated L-amino acids. Cleaves the acetyl group from N-acetyl-L-ornithine to form L-ornithine, an intermediate in L-arginine biosynthesis pathway, and a branchpoint in the synthesis of polyamines. In Escherichia coli O17:K52:H18 (strain UMN026 / ExPEC), this protein is Acetylornithine deacetylase.